A 92-amino-acid polypeptide reads, in one-letter code: Small ribosomal subunit protein bS20 (92 aa).

Residues 1–25 (MANSAQARKRARQAAKANSHNSALR) form a disordered region.

This sequence belongs to the bacterial ribosomal protein bS20 family.

Binds directly to 16S ribosomal RNA. In Paraburkholderia phytofirmans (strain DSM 17436 / LMG 22146 / PsJN) (Burkholderia phytofirmans), this protein is Small ribosomal subunit protein bS20.